The primary structure comprises 80 residues: Defensin coprisin (80 aa).

Positions M1–C20 are cleaved as a signal peptide. Positions N21 to R37 are excised as a propeptide. 3 cysteine pairs are disulfide-bonded: C40/C71, C57/C76, and C61/C78.

This sequence belongs to the invertebrate defensin family. Type 1 subfamily.

It is found in the secreted. The protein resides in the target cell membrane. In terms of biological role, potent broad-spectrum antibacterial peptide against both Gram-positive (B.subtilis, S.epidermidis, and S.aureus) and Gram-negative bacteria (E.coli, S.typhimurium, and P.aeruginosa). Is also active against all antibiotic-resistant bacterial strains tested. Induces apoptosis in C.albicans, but does not disrupt the fungal plasma membrane at all. Acts by permeabilizing the bacterial cell membrane, but not human membranes. Also shows potent anti-inflammatory activities, since it reduces both LPS-induced nitric oxide release and pro-inflammatory cytokine production. Anti-inflammatory activities are initiated by suppressing the binding of LPS to toll-like receptor 4 (TLR4), and subsequently inhibiting the phosphorylation of p38 mitogen-activated protein kinase (MAPK) and nuclear translocation of NF-kB (TNFRSF11A). Does not show hemolytic activity against human erythrocytes. This is Defensin coprisin from Copris tripartitus (Dung beetle).